Here is a 196-residue protein sequence, read N- to C-terminus: GTP cyclohydrolase 1 (196 aa).

3 residues coordinate Zn(2+): cysteine 86, histidine 89, and cysteine 158.

Belongs to the GTP cyclohydrolase I family. As to quaternary structure, toroid-shaped homodecamer, composed of two pentamers of five dimers.

The catalysed reaction is GTP + H2O = 7,8-dihydroneopterin 3'-triphosphate + formate + H(+). The protein operates within cofactor biosynthesis; 7,8-dihydroneopterin triphosphate biosynthesis; 7,8-dihydroneopterin triphosphate from GTP: step 1/1. The polypeptide is GTP cyclohydrolase 1 (Clostridium botulinum (strain Langeland / NCTC 10281 / Type F)).